The sequence spans 364 residues: Aminomethyltransferase (364 aa).

It belongs to the GcvT family. In terms of assembly, the glycine cleavage system is composed of four proteins: P, T, L and H.

It carries out the reaction N(6)-[(R)-S(8)-aminomethyldihydrolipoyl]-L-lysyl-[protein] + (6S)-5,6,7,8-tetrahydrofolate = N(6)-[(R)-dihydrolipoyl]-L-lysyl-[protein] + (6R)-5,10-methylene-5,6,7,8-tetrahydrofolate + NH4(+). The glycine cleavage system catalyzes the degradation of glycine. The chain is Aminomethyltransferase from Shigella sonnei (strain Ss046).